A 301-amino-acid polypeptide reads, in one-letter code: GTP cyclohydrolase FolE2 (301 aa).

This sequence belongs to the GTP cyclohydrolase IV family.

The enzyme catalyses GTP + H2O = 7,8-dihydroneopterin 3'-triphosphate + formate + H(+). It participates in cofactor biosynthesis; 7,8-dihydroneopterin triphosphate biosynthesis; 7,8-dihydroneopterin triphosphate from GTP: step 1/1. Functionally, converts GTP to 7,8-dihydroneopterin triphosphate. The protein is GTP cyclohydrolase FolE2 of Pseudomonas syringae pv. syringae (strain B728a).